A 479-amino-acid polypeptide reads, in one-letter code: Ribulose bisphosphate carboxylase large chain (479 aa).

Residues 1-2 (MS) constitute a propeptide that is removed on maturation. Substrate contacts are provided by Asn123 and Thr173. Residue Lys175 is the Proton acceptor of the active site. Residue Lys177 participates in substrate binding. 3 residues coordinate Mg(2+): Lys201, Asp203, and Glu204. Position 201 is an N6-carboxylysine (Lys201). Position 208 is a phosphoserine (Ser208). The active-site Proton acceptor is His294. Arg295 and His327 together coordinate substrate. The residue at position 330 (Thr330) is a Phosphothreonine. Position 379 (Ser379) interacts with substrate.

This sequence belongs to the RuBisCO large chain family. Type I subfamily. As to quaternary structure, heterohexadecamer of 8 large chains and 8 small chains; disulfide-linked. The disulfide link is formed within the large subunit homodimers. Mg(2+) serves as cofactor. Post-translationally, the disulfide bond which can form in the large chain dimeric partners within the hexadecamer appears to be associated with oxidative stress and protein turnover.

It is found in the plastid. It localises to the chloroplast. It catalyses the reaction 2 (2R)-3-phosphoglycerate + 2 H(+) = D-ribulose 1,5-bisphosphate + CO2 + H2O. The catalysed reaction is D-ribulose 1,5-bisphosphate + O2 = 2-phosphoglycolate + (2R)-3-phosphoglycerate + 2 H(+). Its function is as follows. RuBisCO catalyzes two reactions: the carboxylation of D-ribulose 1,5-bisphosphate, the primary event in carbon dioxide fixation, as well as the oxidative fragmentation of the pentose substrate in the photorespiration process. Both reactions occur simultaneously and in competition at the same active site. The sequence is that of Ribulose bisphosphate carboxylase large chain from Brassica oleracea (Wild cabbage).